The following is a 402-amino-acid chain: Envelope glycoprotein D (402 aa).

An N-terminal signal peptide occupies residues 1–17; the sequence is MLLAALLAALVARTTLG. 3 disulfides stabilise this stretch: C66-C189, C105-C205, and C117-C126. Positions 238–316 are profusion; that stretch reads YRKNGRTLPR…RPTPRPPRPE (79 aa). Residues 252 to 350 form a disordered region; the sequence is ATPYAIDPAR…PRTPAAPGVS (99 aa). Residues 269 to 278 show a composition bias toward basic residues; that stretch reads PRPRPRPRPR. A compositionally biased stretch (pro residues) spans 282–292; sequence EPAPATPAPPD. The span at 293–304 shows a compositional bias: basic and acidic residues; that stretch reads RLPEPATRDHAA. A helical membrane pass occupies residues 356–376; the sequence is IVGTGTAMGALLVGVCVYIFF.

It belongs to the herpesviridae glycoprotein D family. Not N-glycosylated.

Its subcellular location is the virion membrane. Its function is as follows. Envelope glycoprotein that binds to the host cell entry receptor NECTIN1, promoting the virus entry into host cells. In contrast, does not use host TNFRSF14 as receptor. May trigger fusion with host membrane, by recruiting the fusion machinery composed of gB and gH/gL. The sequence is that of Envelope glycoprotein D from Suid herpesvirus 1 (strain Rice) (SuHV-1).